A 99-amino-acid chain; its full sequence is Aspartyl/glutamyl-tRNA(Asn/Gln) amidotransferase subunit C (99 aa).

Belongs to the GatC family. As to quaternary structure, heterotrimer of A, B and C subunits.

The catalysed reaction is L-glutamyl-tRNA(Gln) + L-glutamine + ATP + H2O = L-glutaminyl-tRNA(Gln) + L-glutamate + ADP + phosphate + H(+). The enzyme catalyses L-aspartyl-tRNA(Asn) + L-glutamine + ATP + H2O = L-asparaginyl-tRNA(Asn) + L-glutamate + ADP + phosphate + 2 H(+). Its function is as follows. Allows the formation of correctly charged Asn-tRNA(Asn) or Gln-tRNA(Gln) through the transamidation of misacylated Asp-tRNA(Asn) or Glu-tRNA(Gln) in organisms which lack either or both of asparaginyl-tRNA or glutaminyl-tRNA synthetases. The reaction takes place in the presence of glutamine and ATP through an activated phospho-Asp-tRNA(Asn) or phospho-Glu-tRNA(Gln). The chain is Aspartyl/glutamyl-tRNA(Asn/Gln) amidotransferase subunit C from Orientia tsutsugamushi (strain Ikeda) (Rickettsia tsutsugamushi).